Consider the following 125-residue polypeptide: uncharacterized protein (125 aa).

Residues 36–57 (EAKKAKEKQDSKTKDTDKKVDQ) form a disordered region. The helical transmembrane segment at 92-112 (ITIFLLIVLVSAIMIGIYFGI) threads the bilayer.

The protein resides in the membrane. This is an uncharacterized protein from Mycoplasma pneumoniae (strain ATCC 29342 / M129 / Subtype 1) (Mycoplasmoides pneumoniae).